Here is a 650-residue protein sequence, read N- to C-terminus: Primary amine oxidase 1 (650 aa).

The N-terminal stretch at 1–19 (MNTSILAILFLIQCVFTLG) is a signal peptide. 4 N-linked (GlcNAc...) asparagine glycosylation sites follow: asparagine 2, asparagine 34, asparagine 62, and asparagine 149. A disulfide bond links cysteine 155 and cysteine 176. Residue asparagine 235 is glycosylated (N-linked (GlcNAc...) asparagine). 308–319 (FMDIGEFGFGRS) provides a ligand contact to substrate. Aspartate 310 (proton acceptor) is an active-site residue. Cysteines 329 and 355 form a disulfide. 395–400 (LGNYDY) serves as a coordination point for substrate. Tyrosine 398 serves as the catalytic Schiff-base intermediate with substrate; via topaquinone. Tyrosine 398 is modified (2',4',5'-topaquinone). Residues histidine 453 and histidine 455 each contribute to the Cu cation site. Positions 462 and 464 each coordinate Mn(2+). N-linked (GlcNAc...) asparagine glycosylation occurs at asparagine 486. Positions 607 and 608 each coordinate Mn(2+). Histidine 618 contributes to the Cu cation binding site.

It belongs to the copper/topaquinone oxidase family. Homodimer. L-topaquinone serves as cofactor. It depends on Cu cation as a cofactor. Requires Zn(2+) as cofactor. Mn(2+) is required as a cofactor. In terms of processing, topaquinone (TPQ) is generated by copper-dependent autoxidation of a specific tyrosyl residue. Expressed in the vascular tissues at the division/differentiation transition zone.

The protein resides in the secreted. The enzyme catalyses a primary methyl amine + O2 + H2O = an aldehyde + H2O2 + NH4(+). Repressed by semi-carbazide, a specific and irreversible inhibitor of copper amine oxidases. Functionally, oxidizes preferentially the aliphatic diamine putrescine with production of the corresponding aldehyde, ammonia and hydrogen peroxide. May be involved in the regulation of developmental programmed cell death (PCD) in both vascular tissue and the root cap. Required for jasmonic acid-(MeJA) mediated early protoxylem differentiation associated with putrescine levels reduction and H(2)O(2) accumulation in roots. The polypeptide is Primary amine oxidase 1 (Arabidopsis thaliana (Mouse-ear cress)).